The primary structure comprises 286 residues: Ribosome-inactivating protein beta-momorcharin (286 aa).

A signal peptide spans 1 to 23; the sequence is MVKCLLLSFLIIAIFIGVPTAKG. A glycan (N-linked (GlcNAc...) asparagine) is linked at Asn74. Catalysis depends on residues Tyr93, Tyr132, Glu181, and Arg184.

Belongs to the ribosome-inactivating protein family. Type 1 RIP subfamily. In terms of processing, bound to a branched hexasaccharide.

The catalysed reaction is Endohydrolysis of the N-glycosidic bond at one specific adenosine on the 28S rRNA.. Its function is as follows. Irreversibly relaxes supercoiled DNA and catalyzes double-stranded breakage. Also acts as a ribosome inactivating protein. This is Ribosome-inactivating protein beta-momorcharin (MAP30) from Momordica charantia (Bitter gourd).